The chain runs to 152 residues: MAQPESSADFGIAQQNNYYCYWQSLPSAIRVKQEFQPSQSYRYGNWYARQHGSYLLSGYSYGCAVDGNGKDCFSAHETPEHTAGTLVMPKETTPLAENQDEDPLEDPHLHLNIEESNQEFMVKSEELYDSLMNCHWQPLDTVHSEIPDETPK.

This is an uncharacterized protein from Homo sapiens (Human).